Consider the following 121-residue polypeptide: Cell division protein FtsL (121 aa).

Topologically, residues M1–R34 are cytoplasmic. The helical transmembrane segment at F35–A57 threads the bilayer. Residues H58–K121 lie on the Periplasmic side of the membrane.

Belongs to the FtsL family. In terms of assembly, part of a complex composed of FtsB, FtsL and FtsQ.

Its subcellular location is the cell inner membrane. Its function is as follows. Essential cell division protein. May link together the upstream cell division proteins, which are predominantly cytoplasmic, with the downstream cell division proteins, which are predominantly periplasmic. In Shigella dysenteriae serotype 1 (strain Sd197), this protein is Cell division protein FtsL.